We begin with the raw amino-acid sequence, 287 residues long: Large ribosomal subunit protein uL2 (287 aa).

The segment at 221 to 287 (RGSVMNPCDH…SKRSRGGRDS (67 aa)) is disordered. Positions 258 to 287 (KTRKKNKPSNKLVVRRRRRISKRSRGGRDS) are enriched in basic residues.

Belongs to the universal ribosomal protein uL2 family. As to quaternary structure, part of the 50S ribosomal subunit. Forms a bridge to the 30S subunit in the 70S ribosome.

One of the primary rRNA binding proteins. Required for association of the 30S and 50S subunits to form the 70S ribosome, for tRNA binding and peptide bond formation. It has been suggested to have peptidyltransferase activity; this is somewhat controversial. Makes several contacts with the 16S rRNA in the 70S ribosome. In Prochlorococcus marinus (strain MIT 9215), this protein is Large ribosomal subunit protein uL2.